The primary structure comprises 64 residues: DNA gyrase inhibitor YacG (64 aa).

Zn(2+) is bound by residues Cys-7, Cys-10, Cys-26, and Cys-30. A disordered region spans residues 44 to 64 (RIPGEIDPELLPYPEEGEQWQ).

The protein belongs to the DNA gyrase inhibitor YacG family. Interacts with GyrB. Zn(2+) is required as a cofactor.

Functionally, inhibits all the catalytic activities of DNA gyrase by preventing its interaction with DNA. Acts by binding directly to the C-terminal domain of GyrB, which probably disrupts DNA binding by the gyrase. This Aeromonas hydrophila subsp. hydrophila (strain ATCC 7966 / DSM 30187 / BCRC 13018 / CCUG 14551 / JCM 1027 / KCTC 2358 / NCIMB 9240 / NCTC 8049) protein is DNA gyrase inhibitor YacG.